The primary structure comprises 110 residues: Thioredoxin Asp f 29 (110 aa).

In terms of domain architecture, Thioredoxin spans 1-110 (MSHNVEKITD…LEAAIKAHVA (110 aa)). Active-site nucleophile residues include Cys34 and Cys37. A disulfide bond links Cys34 and Cys37.

It belongs to the thioredoxin family.

Functionally, participates in various redox reactions through the reversible oxidation of its active center dithiol to a disulfide and catalyzes dithiol-disulfide exchange reactions. This chain is Thioredoxin Asp f 29, found in Aspergillus fumigatus (Neosartorya fumigata).